The sequence spans 113 residues: U11-theraphotoxin-Hhn1a (113 aa).

An N-terminal signal peptide occupies residues 1-21 (MNTVRVTFLLVFVLAVSLGRA). A propeptide spanning residues 22–74 (DKDENRMEMQEKTEQGKSYLDFAENLLLQKLEELEAKLLEEDSEESRNSRQKR) is cleaved from the precursor. 3 disulfides stabilise this stretch: cysteine 75-cysteine 90, cysteine 82-cysteine 95, and cysteine 89-cysteine 110.

This sequence belongs to the neurotoxin 14 (magi-1) family. 01 (HNTX-16) subfamily. In terms of tissue distribution, expressed by the venom gland.

The protein resides in the secreted. Its function is as follows. Probable ion channel inhibitor. This is U11-theraphotoxin-Hhn1a from Cyriopagopus hainanus (Chinese bird spider).